Reading from the N-terminus, the 150-residue chain is Viral late gene transcription factor 2 (150 aa).

Belongs to the orthopoxvirus VLTF-2/OPG126 family. Interacts with the late transcription elongation factor VLTF-4/OPG110. Interacts with the late transcription factors VLTF-1/OPG093.

In terms of biological role, acts with RNA polymerase to initiate transcription from late gene promoters. The protein is Viral late gene transcription factor 2 (OPG126) of Monkeypox virus.